Reading from the N-terminus, the 938-residue chain is Isoleucine--tRNA ligase (938 aa).

The short motif at 58-68 is the 'HIGH' region element; sequence PYANGSIHIGH. Position 561 (glutamate 561) interacts with L-isoleucyl-5'-AMP. Residues 602-606 carry the 'KMSKS' region motif; it reads KMSKS. Lysine 605 contributes to the ATP binding site. 4 residues coordinate Zn(2+): cysteine 901, cysteine 904, cysteine 921, and cysteine 924.

It belongs to the class-I aminoacyl-tRNA synthetase family. IleS type 1 subfamily. In terms of assembly, monomer. Zn(2+) is required as a cofactor.

Its subcellular location is the cytoplasm. The enzyme catalyses tRNA(Ile) + L-isoleucine + ATP = L-isoleucyl-tRNA(Ile) + AMP + diphosphate. In terms of biological role, catalyzes the attachment of isoleucine to tRNA(Ile). As IleRS can inadvertently accommodate and process structurally similar amino acids such as valine, to avoid such errors it has two additional distinct tRNA(Ile)-dependent editing activities. One activity is designated as 'pretransfer' editing and involves the hydrolysis of activated Val-AMP. The other activity is designated 'posttransfer' editing and involves deacylation of mischarged Val-tRNA(Ile). This Erwinia tasmaniensis (strain DSM 17950 / CFBP 7177 / CIP 109463 / NCPPB 4357 / Et1/99) protein is Isoleucine--tRNA ligase.